Consider the following 373-residue polypeptide: Zinc finger protein CONSTANS (373 aa).

The B box-type 1; atypical zinc-finger motif lies at 15–57 (NRARPCDTCRSNACTVYCHADSAYLCMSCDAQVHSANRVASRH). Cys-20, Cys-23, Cys-43, His-48, Cys-63, Cys-66, Cys-86, and His-91 together coordinate Zn(2+). Residues 58–108 (KRVRVCESCERAPAAFLCEADDASLCTACDSEVHSANPLARRHQRVPILPI) form a B box-type 2; atypical zinc finger. The span at 109–120 (SGNSFSSMTTTH) shows a compositional bias: polar residues. A disordered region spans residues 109 to 130 (SGNSFSSMTTTHHQSEKTMTDP). A compositionally biased stretch (basic and acidic residues) spans 121–130 (HQSEKTMTDP). One can recognise a CCT domain in the interval 306-348 (REARVLRYREKRKTRKFEKTIRYASRKAYAEIRPRVNGRFAKR).

This sequence belongs to the CONSTANS family. As to quaternary structure, interacts with ADO3, SPA1, SPA2, SPA3 and SPA4. Interacts with MRG1 and MRG2 (via MRG domain). Interacts (via B-box) with MIP1A. Interacts with AS1 to form a functional complex regulating FT expression. Interacts with NFYC9. Component of a red light-dependent nuclear complex made of PHL, PHYB and CO. Interacts directly with PHL in the presence of PHYB. As to expression, expressed in leaves, shoots and shoot apical meristem. Detected in the vascular tissue of the hypocotyl, the cotyledons and the leaves. Restricted to the protoxylem and phloem in young inflorescence stems and to the phloem only in older inflorescences. Also detected in the vascular tissue of the root.

The protein resides in the nucleus. In terms of biological role, transcription factor that acts in the long day flowering pathway and may mediate between the circadian clock and the control of flowering. Plays a role in the regulation of flowering time by acting on 'SUPPRESSOR OF OVEREXPRESSION OF CO1', 'TERMINAL FLOWER 1' and 'FLOWERING LOCUS T'. Also regulates P5CS2 and ACS10 (involved in proline and ethylene biosynthesis, respectively). Regulates the expression of NAKR1 by binding to the 5'-TGTG(N2-3)ATG-3' motif. The chain is Zinc finger protein CONSTANS from Arabidopsis thaliana (Mouse-ear cress).